The following is a 149-amino-acid chain: uncharacterized protein (149 aa).

This is an uncharacterized protein from Schizosaccharomyces pombe (strain 972 / ATCC 24843) (Fission yeast).